A 159-amino-acid polypeptide reads, in one-letter code: Late embryogenesis abundant protein 50 (159 aa).

SMP domains lie at Thr-30–Lys-87 and Asn-96–Asn-151.

This sequence belongs to the LEA type SMP family.

Its subcellular location is the cytoplasm. It localises to the nucleus. LEA proteins are late embryonic proteins abundant in higher plant seed embryos. The function of those proteins is not known. This chain is Late embryogenesis abundant protein 50, found in Arabidopsis thaliana (Mouse-ear cress).